Consider the following 276-residue polypeptide: Large ribosomal subunit protein uL2 (276 aa).

The interval 225–276 is disordered; that stretch reads MNPVDHPHGGGEGRAPVGRKHPVTPWGKPAMGAKTRKKRKLSDKLIVKPRNK. A compositionally biased stretch (basic residues) spans 258-276; it reads KTRKKRKLSDKLIVKPRNK.

Belongs to the universal ribosomal protein uL2 family. As to quaternary structure, part of the 50S ribosomal subunit. Forms a bridge to the 30S subunit in the 70S ribosome.

Functionally, one of the primary rRNA binding proteins. Required for association of the 30S and 50S subunits to form the 70S ribosome, for tRNA binding and peptide bond formation. It has been suggested to have peptidyltransferase activity; this is somewhat controversial. Makes several contacts with the 16S rRNA in the 70S ribosome. The chain is Large ribosomal subunit protein uL2 from Moorella thermoacetica (strain ATCC 39073 / JCM 9320).